A 42-amino-acid chain; its full sequence is uncharacterized protein (42 aa).

Residues 15-35 (INVCLSFFFLFYFIFVLFFAA) traverse the membrane as a helical segment.

The protein localises to the membrane. This is an uncharacterized protein from Dictyostelium discoideum (Social amoeba).